The primary structure comprises 156 residues: Protein-export protein SecB (156 aa).

This sequence belongs to the SecB family. Homotetramer, a dimer of dimers. One homotetramer interacts with 1 SecA dimer.

Its subcellular location is the cytoplasm. Its function is as follows. One of the proteins required for the normal export of preproteins out of the cell cytoplasm. It is a molecular chaperone that binds to a subset of precursor proteins, maintaining them in a translocation-competent state. It also specifically binds to its receptor SecA. This chain is Protein-export protein SecB, found in Paraburkholderia phymatum (strain DSM 17167 / CIP 108236 / LMG 21445 / STM815) (Burkholderia phymatum).